A 272-amino-acid polypeptide reads, in one-letter code: MIKVSDVCFSYTNNMDQLVLKNINVVFEKGKYYAILGHNGSGKSTFSKILSGIFKPQKGSIEVDGVLLNKENLTKIRKKIGIIFQNPDNQFVGATVEDDIAFSLENINEDPKKMSQIIANLAAKVQMESYLDREPQFLSGGQKQRVAIASVLALNPEIIIFDEITSMLDPRGKYDVVKILDDLRKDKTKTLISITHNMNEAILADEIIVFANGGIIAQGDPKLILNDKNIIEKAKIDSPFIYKISSALKLVSPTYDENELLEQLWKLKQKTS.

In terms of domain architecture, ABC transporter spans I2 to D237. G37–S44 serves as a coordination point for ATP.

The protein belongs to the ABC transporter superfamily. Energy-coupling factor EcfA family. In terms of assembly, forms a stable energy-coupling factor (ECF) transporter complex composed of 2 membrane-embedded substrate-binding proteins (S component), 2 ATP-binding proteins (A component) and 2 transmembrane proteins (T component).

The protein localises to the cell membrane. ATP-binding (A) component of a common energy-coupling factor (ECF) ABC-transporter complex. Unlike classic ABC transporters this ECF transporter provides the energy necessary to transport a number of different substrates. The protein is Energy-coupling factor transporter ATP-binding protein EcfA1 of Mesomycoplasma hyopneumoniae (strain 7448) (Mycoplasma hyopneumoniae).